An 852-amino-acid chain; its full sequence is Kinesin-like protein KIF18B (852 aa).

Positions 7-351 (TLQVVVRVRP…LKYADRAKEI (345 aa)) constitute a Kinesin motor domain. 109 to 116 (GATGAGKT) provides a ligand contact to ATP. Residues 366-393 (ISQYATICQQLQAEVAALRKKLQVYEGG) adopt a coiled-coil conformation. Disordered stretches follow at residues 390-424 (YEGG…PAGP) and 437-485 (QVER…RLTL). At S404 the chain carries Phosphoserine. Residue T417 is modified to Phosphothreonine. The segment covering 451 to 461 (QSPEDEDEGPA) has biased composition (acidic residues). 3 positions are modified to phosphoserine: S452, S480, and S558. Disordered stretches follow at residues 575–594 (IPVP…PVTR) and 602–689 (GPLH…SPRV). Residues 577 to 588 (VPSPLCPEPPGY) show a composition bias toward pro residues. Residues 624-632 (PMEKKRRRP) carry the Nuclear localization signal motif. A phosphoserine mark is found at S633 and S639. The MAPRE1-binding motif lies at 653–656 (SFLP). Phosphoserine is present on S662. Positions 664 to 673 (PDTQPSQGPS) are enriched in polar residues. Residue T674 is modified to Phosphothreonine. A KIF2C-binding region spans residues 711 to 736 (TPLALPTRDLNATFDLSEEPPSKPSF). The tract at residues 767-798 (MKGPKPTSSLPGTSACKKKRVASSSVSHGRSR) is disordered. 2 short sequence motifs (MAPRE1-binding) span residues 774–777 (SSLP) and 800–803 (ARLP). S822 carries the post-translational modification Phosphoserine.

This sequence belongs to the TRAFAC class myosin-kinesin ATPase superfamily. Kinesin family. Interacts with MAPRE1; this interaction is required for efficient accumulation at microtubule plus ends. Interacts with KIF2C at microtubule tips; this interaction increases the affinity of both partners for microtubule plus ends and is required for robust microtubule depolymerization. KIF2C phosphorylation by AURKA or AURKB strongly reduces KIF18B-binding. As to expression, shows a prominent expression in the amygdala.

It is found in the nucleus. It localises to the cytoplasm. The protein localises to the cytoskeleton. In terms of biological role, in complex with KIF2C, constitutes the major microtubule plus-end depolymerizing activity in mitotic cells. Its major role may be to transport KIF2C and/or MAPRE1 along microtubules. The chain is Kinesin-like protein KIF18B (KIF18B) from Homo sapiens (Human).